We begin with the raw amino-acid sequence, 188 residues long: Elongation factor P (188 aa).

The protein belongs to the elongation factor P family.

The protein localises to the cytoplasm. Its pathway is protein biosynthesis; polypeptide chain elongation. Involved in peptide bond synthesis. Stimulates efficient translation and peptide-bond synthesis on native or reconstituted 70S ribosomes in vitro. Probably functions indirectly by altering the affinity of the ribosome for aminoacyl-tRNA, thus increasing their reactivity as acceptors for peptidyl transferase. This chain is Elongation factor P, found in Chlorobium chlorochromatii (strain CaD3).